A 228-amino-acid chain; its full sequence is MLLYLPQIFSSRASSLLFLVPYLLFWENVASISTCAERDATIQHSLEKLLTLTTFMSHVMSIETAKLFTEFNNQYAQGKRYNDRIPGTCHTAFFDTPVNKEQSLGSDPKTLLKLVRSLLNSWTNALNHLVNEISAMQGDPSFLFSKAREIQAKFDELTTGVKTILSMIGERDNDTHLAWSGLSSLQSSNEDVRCFSFYTLIRCLLRDSRKVNTYLEVIKYQIFNQNNC.

The signal sequence occupies residues M1–S31. 2 disulfides stabilise this stretch: C89/C194 and C203/C228. N-linked (GlcNAc...) asparagine glycosylation occurs at N173.

This sequence belongs to the somatotropin/prolactin family. Expression restricted to the placenta in trophoblast cells within the labyrinth zone.

It localises to the secreted. This Rattus norvegicus (Rat) protein is Prolactin-2B1 (Prl2b1).